The sequence spans 438 residues: Putative cytochrome P450 140 (438 aa).

Cysteine 381 contributes to the heme binding site.

Belongs to the cytochrome P450 family. The cofactor is heme.

This is Putative cytochrome P450 140 (cyp140) from Mycobacterium bovis (strain ATCC BAA-935 / AF2122/97).